The chain runs to 241 residues: Octanoyltransferase (241 aa).

In terms of domain architecture, BPL/LPL catalytic spans 43 to 228 (AETPDEIWLV…CLTANLDGSP (186 aa)). Residues 83–90 (RGGQITYH), 159–161 (ALG), and 172–174 (GVS) contribute to the substrate site. The active-site Acyl-thioester intermediate is the Cys190.

It belongs to the LipB family.

The protein localises to the cytoplasm. The enzyme catalyses octanoyl-[ACP] + L-lysyl-[protein] = N(6)-octanoyl-L-lysyl-[protein] + holo-[ACP] + H(+). It functions in the pathway protein modification; protein lipoylation via endogenous pathway; protein N(6)-(lipoyl)lysine from octanoyl-[acyl-carrier-protein]: step 1/2. In terms of biological role, catalyzes the transfer of endogenously produced octanoic acid from octanoyl-acyl-carrier-protein onto the lipoyl domains of lipoate-dependent enzymes. Lipoyl-ACP can also act as a substrate although octanoyl-ACP is likely to be the physiological substrate. This chain is Octanoyltransferase, found in Paraburkholderia xenovorans (strain LB400).